The primary structure comprises 299 residues: Prohibitin-2 (299 aa).

Position 2 is an N-acetylalanine (alanine 2). The necessary for transcriptional repression stretch occupies residues 19 to 49; the sequence is MGTALKLLLGAGAVAYGVRESVFTVEGGHRA. At tyrosine 128 the chain carries Phosphotyrosine. Lysine 147 bears the N6-acetyllysine mark. Residues 150–174 are necessary for transcriptional repression; sequence ASQLITQRAQVSLLIRRELTERAKD. The residue at position 151 (serine 151) is a Phosphoserine. Positions 190–238 form a coiled coil; it reads SREYTAAVEAKQVAQQEAQRAQFLVEKAKQEQRQKIVQAEGEAEAAKML. 4 positions are modified to N6-acetyllysine: lysine 200, lysine 236, lysine 250, and lysine 262.

This sequence belongs to the prohibitin family. The mitochondrial prohibitin complex consists of two subunits (PHB1 and PHB2), assembled into a membrane-associated ring-shaped supercomplex of approximately 1 mDa. Interacts with ESR1, HDAC1 and HDAC5. Interacts with ZNF703. Interacts with STOML2. Interacts with ARFGEF3. Interacts with SPHK2. Interacts with COX4I1; the interaction associates PHB2 with COX. Interacts with MAP1LC3B (membrane-bound form LC3-II); the interaction is direct and upon mitochondrial depolarization and proteasome-dependent outer membrane rupture. Interacts with IGFBP6 (via C-terminal domain). Interacts with CLPB. Interacts with CD86 (via cytoplasmic domain); the interactions increases after priming with CD40. Interacts with AFG3L2. Interacts with DNAJC19. Interacts with AKT2; this interaction may be important for myogenic differentiation. Post-translationally, phosphorylated. Tyrosine phosphorylation is indirectly stimulated by IGFBP6. In terms of tissue distribution, widely expressed in different tissues.

The protein resides in the mitochondrion inner membrane. The protein localises to the cytoplasm. Its subcellular location is the nucleus. It localises to the cell membrane. Functionally, protein with pleiotropic attributes mediated in a cell-compartment- and tissue-specific manner, which include the plasma membrane-associated cell signaling functions, mitochondrial chaperone, and transcriptional co-regulator of transcription factors and sex steroid hormones in the nucleus. In terms of biological role, in the mitochondria, together with PHB, forms large ring complexes (prohibitin complexes) in the inner mitochondrial membrane (IMM) and functions as a chaperone protein that stabilizes mitochondrial respiratory enzymes and maintains mitochondrial integrity in the IMM, which is required for mitochondrial morphogenesis, neuronal survival, and normal lifespan. The prohibitin complex, with DNAJC19, regulates cardiolipin remodeling and the protein turnover of OMA1 in a cardiolipin-binding manner. Also regulates cytochrome-c oxidase assembly (COX) and mitochondrial respiration. Binding to sphingoid 1-phosphate (SPP) modulates its regulator activity. Has a key role of mitophagy receptor involved in targeting mitochondria for autophagic degradation. Involved in mitochondrial-mediated antiviral innate immunity, activates RIG-I-mediated signal transduction and production of IFNB1 and pro-inflammatory cytokine IL6. Its function is as follows. In the nucleus, serves as transcriptional co-regulator. Acts as a mediator of transcriptional repression by nuclear hormone receptors via recruitment of histone deacetylases. Functions as an estrogen receptor (ER)-selective coregulator that potentiates the inhibitory activities of antiestrogens and represses the activity of estrogens. Competes with NCOA1 for modulation of ER transcriptional activity. In the plasma membrane, is involved in IGFBP6-induced cell migration. Cooperates with CD86 to mediate CD86-signaling in B lymphocytes that regulates the level of IgG1 produced through the activation of distal signaling intermediates. Upon CD40 engagement, required to activate NF-kappa-B signaling pathway via phospholipase C and protein kinase C activation. This Mus musculus (Mouse) protein is Prohibitin-2.